A 113-amino-acid chain; its full sequence is Hydrogenase maturation factor HypA (113 aa).

Histidine 2 serves as a coordination point for Ni(2+). The Zn(2+) site is built by cysteine 73, cysteine 76, cysteine 89, and cysteine 92.

It belongs to the HypA/HybF family.

Involved in the maturation of [NiFe] hydrogenases. Required for nickel insertion into the metal center of the hydrogenase. The polypeptide is Hydrogenase maturation factor HypA (Rhodobacter capsulatus (Rhodopseudomonas capsulata)).